Consider the following 98-residue polypeptide: Large ribosomal subunit protein uL23 (98 aa).

Belongs to the universal ribosomal protein uL23 family. In terms of assembly, part of the 50S ribosomal subunit. Contacts protein L29, and trigger factor when it is bound to the ribosome.

One of the early assembly proteins it binds 23S rRNA. One of the proteins that surrounds the polypeptide exit tunnel on the outside of the ribosome. Forms the main docking site for trigger factor binding to the ribosome. This is Large ribosomal subunit protein uL23 from Rickettsia peacockii (strain Rustic).